We begin with the raw amino-acid sequence, 98 residues long: EKC/KEOPS complex subunit GON7 (98 aa).

The residue at position 1 (Met-1) is an N-acetylmethionine. Residues 55–98 (DAQGLAEDPDDALDGDDEDDAEDENNSGRTNSDGPSAKRPKPAS) are disordered. Residues 61-79 (EDPDDALDGDDEDDAEDEN) show a composition bias toward acidic residues.

As to quaternary structure, component of the EKC/KEOPS complex composed of at least GON7, TP53RK, TPRKB, OSGEP and LAGE3; the whole complex dimerizes.

It localises to the nucleus. Its function is as follows. Component of the EKC/KEOPS complex that is required for the formation of a threonylcarbamoyl group on adenosine at position 37 (t(6)A37) in tRNAs that read codons beginning with adenine. The complex is probably involved in the transfer of the threonylcarbamoyl moiety of threonylcarbamoyl-AMP (TC-AMP) to the N6 group of A37. GON7 plays a supporting role to the catalytic subunit OSGEP in the complex. This chain is EKC/KEOPS complex subunit GON7, found in Mus musculus (Mouse).